The primary structure comprises 796 residues: Molybdenum cofactor sulfurase (796 aa).

The residue at position 246 (lysine 246) is an N6-(pyridoxal phosphate)lysine. Cysteine 418 is an active-site residue. Residues 650–796 form the MOSC domain; that stretch reads LRLLRQSSQR…LTCGDVVVVT (147 aa). At serine 752 the chain carries Phosphoserine.

Belongs to the class-V pyridoxal-phosphate-dependent aminotransferase family. MOCOS subfamily. The cofactor is pyridoxal 5'-phosphate.

It catalyses the reaction Mo-molybdopterin + L-cysteine + AH2 = thio-Mo-molybdopterin + L-alanine + A + H2O. In terms of biological role, sulfurates the molybdenum cofactor. Sulfation of molybdenum is essential for xanthine dehydrogenase (XDH) and aldehyde oxidase (ADO) enzymes in which molybdenum cofactor is liganded by 1 oxygen and 1 sulfur atom in active form. This Drosophila persimilis (Fruit fly) protein is Molybdenum cofactor sulfurase.